The primary structure comprises 156 residues: Transcription antitermination protein NusB (156 aa).

It belongs to the NusB family.

Involved in transcription antitermination. Required for transcription of ribosomal RNA (rRNA) genes. Binds specifically to the boxA antiterminator sequence of the ribosomal RNA (rrn) operons. This chain is Transcription antitermination protein NusB, found in Mycobacterium bovis (strain ATCC BAA-935 / AF2122/97).